Here is a 134-residue protein sequence, read N- to C-terminus: Cytochrome b5 (134 aa).

Position 2 is an N-acetylalanine (alanine 2). Residues lysine 7, lysine 10, and lysine 19 each carry the N6-acetyllysine modification. In terms of domain architecture, Cytochrome b5 heme-binding spans 9-85 (VKYYTLEEIQ…SKTFIIGELH (77 aa)). Heme contacts are provided by histidine 44 and histidine 68. Residues 109-131 (WWTNWVIPAISALVVSLMYHFYT) traverse the membrane as a helical segment.

The protein belongs to the cytochrome b5 family.

Its subcellular location is the endoplasmic reticulum membrane. It is found in the microsome membrane. The protein resides in the cytoplasm. Its function is as follows. Cytochrome b5 is a membrane-bound hemoprotein functioning as an electron carrier for several membrane-bound oxygenases. In Sus scrofa (Pig), this protein is Cytochrome b5 (CYB5A).